The primary structure comprises 104 residues: ATP synthase subunit c (104 aa).

2 helical membrane passes run 37-57 and 83-103; these read LLGA…QGAV and AGIA…LIFV.

The protein belongs to the ATPase C chain family. As to quaternary structure, F-type ATPases have 2 components, F(1) - the catalytic core - and F(0) - the membrane proton channel. F(1) has five subunits: alpha(3), beta(3), gamma(1), delta(1), epsilon(1). F(0) has three main subunits: a(1), b(2) and c(10-14). The alpha and beta chains form an alternating ring which encloses part of the gamma chain. F(1) is attached to F(0) by a central stalk formed by the gamma and epsilon chains, while a peripheral stalk is formed by the delta and b chains.

The protein resides in the cell membrane. F(1)F(0) ATP synthase produces ATP from ADP in the presence of a proton or sodium gradient. F-type ATPases consist of two structural domains, F(1) containing the extramembraneous catalytic core and F(0) containing the membrane proton channel, linked together by a central stalk and a peripheral stalk. During catalysis, ATP synthesis in the catalytic domain of F(1) is coupled via a rotary mechanism of the central stalk subunits to proton translocation. Its function is as follows. Key component of the F(0) channel; it plays a direct role in translocation across the membrane. A homomeric c-ring of between 10-14 subunits forms the central stalk rotor element with the F(1) delta and epsilon subunits. The protein is ATP synthase subunit c of Mesoplasma florum (strain ATCC 33453 / NBRC 100688 / NCTC 11704 / L1) (Acholeplasma florum).